A 205-amino-acid chain; its full sequence is Probable transcription factor Ken (205 aa).

3 C2H2-type zinc fingers span residues 106-128 (YRCE…LRVH), 134-157 (FACR…CSVH), and 173-196 (YSCC…SGHH).

It is found in the nucleus. In terms of biological role, probable transcription factor, which is required for terminalia development. This chain is Probable transcription factor Ken (ken), found in Drosophila yakuba (Fruit fly).